The following is a 121-amino-acid chain: Large ribosomal subunit protein bL12 (121 aa).

It belongs to the bacterial ribosomal protein bL12 family. In terms of assembly, homodimer. Part of the ribosomal stalk of the 50S ribosomal subunit. Forms a multimeric L10(L12)X complex, where L10 forms an elongated spine to which 2 to 4 L12 dimers bind in a sequential fashion. Binds GTP-bound translation factors.

Functionally, forms part of the ribosomal stalk which helps the ribosome interact with GTP-bound translation factors. Is thus essential for accurate translation. The sequence is that of Large ribosomal subunit protein bL12 from Shigella sonnei (strain Ss046).